Here is a 473-residue protein sequence, read N- to C-terminus: Photosystem II CP43 reaction center protein (473 aa).

The propeptide occupies 1–14 (MKILYSLRRFYHVE). Thr-15 carries the post-translational modification N-acetylthreonine. Thr-15 carries the post-translational modification Phosphothreonine. 5 helical membrane-spanning segments follow: residues 69 to 93 (LFEV…PHLA), 134 to 155 (LLGP…KDRN), 178 to 200 (KALY…RKIT), 255 to 275 (KPFA…LSYS), and 291 to 312 (WFNN…ASQA). Position 367 (Glu-367) interacts with [CaMn4O5] cluster. The chain crosses the membrane as a helical span at residues 447 to 471 (RARAAAAGFEKGIDRDLEPVLYMTP).

It belongs to the PsbB/PsbC family. PsbC subfamily. PSII is composed of 1 copy each of membrane proteins PsbA, PsbB, PsbC, PsbD, PsbE, PsbF, PsbH, PsbI, PsbJ, PsbK, PsbL, PsbM, PsbT, PsbX, PsbY, PsbZ, Psb30/Ycf12, at least 3 peripheral proteins of the oxygen-evolving complex and a large number of cofactors. It forms dimeric complexes. Binds multiple chlorophylls and provides some of the ligands for the Ca-4Mn-5O cluster of the oxygen-evolving complex. It may also provide a ligand for a Cl- that is required for oxygen evolution. PSII binds additional chlorophylls, carotenoids and specific lipids. is required as a cofactor.

The protein localises to the plastid. The protein resides in the chloroplast thylakoid membrane. Functionally, one of the components of the core complex of photosystem II (PSII). It binds chlorophyll and helps catalyze the primary light-induced photochemical processes of PSII. PSII is a light-driven water:plastoquinone oxidoreductase, using light energy to abstract electrons from H(2)O, generating O(2) and a proton gradient subsequently used for ATP formation. The polypeptide is Photosystem II CP43 reaction center protein (Sorghum bicolor (Sorghum)).